A 539-amino-acid polypeptide reads, in one-letter code: GMP synthase [glutamine-hydrolyzing] (539 aa).

A Glutamine amidotransferase type-1 domain is found at 4–202 (KILILDFGSQ…VLGICRAKAD (199 aa)). Cysteine 81 serves as the catalytic Nucleophile. Catalysis depends on residues histidine 176 and glutamate 178. Residues 203-395 (WVMKDHIEEA…LGLPPEMVYR (193 aa)) form the GMPS ATP-PPase domain. 230–236 (SGGVDSS) is an ATP binding site.

In terms of assembly, homodimer.

The enzyme catalyses XMP + L-glutamine + ATP + H2O = GMP + L-glutamate + AMP + diphosphate + 2 H(+). Its pathway is purine metabolism; GMP biosynthesis; GMP from XMP (L-Gln route): step 1/1. In terms of biological role, catalyzes the synthesis of GMP from XMP. The polypeptide is GMP synthase [glutamine-hydrolyzing] (Cupriavidus pinatubonensis (strain JMP 134 / LMG 1197) (Cupriavidus necator (strain JMP 134))).